A 361-amino-acid polypeptide reads, in one-letter code: 3-dehydroquinate synthase (361 aa).

Residues 72-77 (SGEKEK), 130-131 (TT), Lys-142, and Lys-151 contribute to the NAD(+) site. The Zn(2+) site is built by Glu-184, His-247, and His-264.

This sequence belongs to the sugar phosphate cyclases superfamily. Dehydroquinate synthase family. Co(2+) is required as a cofactor. The cofactor is Zn(2+). Requires NAD(+) as cofactor.

Its subcellular location is the cytoplasm. The enzyme catalyses 7-phospho-2-dehydro-3-deoxy-D-arabino-heptonate = 3-dehydroquinate + phosphate. The protein operates within metabolic intermediate biosynthesis; chorismate biosynthesis; chorismate from D-erythrose 4-phosphate and phosphoenolpyruvate: step 2/7. Catalyzes the conversion of 3-deoxy-D-arabino-heptulosonate 7-phosphate (DAHP) to dehydroquinate (DHQ). The chain is 3-dehydroquinate synthase from Bacillus cereus (strain ZK / E33L).